Here is an 805-residue protein sequence, read N- to C-terminus: 1,4-alpha-glucan-branching enzyme 2-2, chloroplastic/amyloplastic (805 aa).

Residues 1-32 (MVVIHGVSLTPRFTLPSRPLNTGFNAGNSTLS) constitute a chloroplast transit peptide. Asp-451 acts as the Nucleophile in catalysis. Residue Glu-506 is the Proton donor of the active site.

This sequence belongs to the glycosyl hydrolase 13 family. GlgB subfamily. As to quaternary structure, monomer. In terms of tissue distribution, expressed in seedlings, roots, stems, leaves, inflorescences, seeds and flowers.

Its subcellular location is the plastid. The protein resides in the chloroplast stroma. The protein localises to the amyloplast. It carries out the reaction Transfers a segment of a (1-&gt;4)-alpha-D-glucan chain to a primary hydroxy group in a similar glucan chain.. It participates in glycan biosynthesis; starch biosynthesis. In terms of biological role, catalyzes the formation of the alpha-1,6-glucosidic linkages in starch by scission of a 1,4-alpha-linked oligosaccharide from growing alpha-1,4-glucan chains and the subsequent attachment of the oligosaccharide to the alpha-1,6 position. This Arabidopsis thaliana (Mouse-ear cress) protein is 1,4-alpha-glucan-branching enzyme 2-2, chloroplastic/amyloplastic (SBE2.2).